Reading from the N-terminus, the 311-residue chain is tRNA dimethylallyltransferase (311 aa).

9-16 is an ATP binding site; it reads GPTAVGKT. 11–16 serves as a coordination point for substrate; it reads TAVGKT. Residues 34-37 form an interaction with substrate tRNA region; that stretch reads DSMQ.

Belongs to the IPP transferase family. As to quaternary structure, monomer. The cofactor is Mg(2+).

The catalysed reaction is adenosine(37) in tRNA + dimethylallyl diphosphate = N(6)-dimethylallyladenosine(37) in tRNA + diphosphate. Functionally, catalyzes the transfer of a dimethylallyl group onto the adenine at position 37 in tRNAs that read codons beginning with uridine, leading to the formation of N6-(dimethylallyl)adenosine (i(6)A). This is tRNA dimethylallyltransferase from Clostridium botulinum (strain Loch Maree / Type A3).